We begin with the raw amino-acid sequence, 504 residues long: Cytochrome P450 2D9 (504 aa).

Serine 249 bears the Phosphoserine mark. Position 446 (cysteine 446) interacts with heme.

The protein belongs to the cytochrome P450 family. The cofactor is heme.

It is found in the endoplasmic reticulum membrane. It localises to the microsome membrane. It carries out the reaction an organic molecule + reduced [NADPH--hemoprotein reductase] + O2 = an alcohol + oxidized [NADPH--hemoprotein reductase] + H2O + H(+). Functionally, cytochromes P450 are a group of heme-thiolate monooxygenases. In liver microsomes, this enzyme is involved in an NADPH-dependent electron transport pathway. It oxidizes a variety of structurally unrelated compounds, including steroids, fatty acids, and xenobiotics. The sequence is that of Cytochrome P450 2D9 (Cyp2d9) from Mus musculus (Mouse).